The following is a 338-amino-acid chain: UPF0194 membrane protein in asrC 5'region (338 aa).

The signal sequence occupies residues methionine 1–alanine 23. A coiled-coil region spans residues lysine 148–aspartate 207.

This sequence belongs to the UPF0194 family.

Its subcellular location is the periplasm. The protein is UPF0194 membrane protein in asrC 5'region of Acidithiobacillus ferridurans.